The sequence spans 806 residues: SH3-containing GRB2-like protein 3-interacting protein 1 (806 aa).

Disordered stretches follow at residues 1-115 (MMEG…ESHK) and 142-278 (SIGN…QAAT). Composition is skewed to basic and acidic residues over residues 16–32 (RKKEKDTDSTGSPDRDG) and 40–54 (PPYHSKAECAREGGK). Ser78, Ser104, Ser105, Ser107, Ser149, Ser151, Ser156, and Ser169 each carry phosphoserine. Thr180 and Thr182 each carry phosphothreonine. A phosphoserine mark is found at Ser236 and Phe243. The segment covering 245–260 (TGTPPPLPPKTVPATP) has biased composition (pro residues). 2 positions are modified to phosphothreonine: Thr247 and Thr259. Ser265, Asp274, Ser287, Ser289, Ser300, Ser316, and Ser319 each carry phosphoserine. The segment covering 265–276 (SPLTVATGNDQA) has biased composition (polar residues). The span at 315–324 (FSDASPEHVT) shows a compositional bias: basic and acidic residues. Positions 315-533 (FSDASPEHVT…SRGPSPLTMG (219 aa)) are disordered. A phosphothreonine mark is found at Thr324, Thr328, and Thr335. Residues 335–345 (TPPAASDIPAD) show a composition bias toward low complexity. Phosphoserine is present on Ala338. Pro residues predominate over residues 346-369 (SPAPAPPGPTGSAGPPGPPGPRHV). Ser371 is subject to Phosphoserine. The segment covering 377 to 392 (EVQKKVAEQTFIKDDY) has biased composition (basic and acidic residues). Phosphoserine is present on Ser398. Thr409 bears the Phosphothreonine mark. Positions 436 to 453 (TSGASSPARPATPLVPCS) are enriched in low complexity. A compositionally biased stretch (pro residues) spans 454-473 (TTPPPPPPRPPSRPKLPPGK). 2 stretches are compositionally biased toward low complexity: residues 480 to 490 (SRPFSPPIHSS) and 497 to 520 (PLARAESTSSISSTNSLSAATTPT). Phosphoserine is present on residues Ser484, Ser505, and Gly533. The MHD domain maps to 537-805 (TLPVAAAFTE…RFAAGKYLAD (269 aa)). 4 interaction with DPF motifs-containing proteins regions span residues 539–545 (PVAAAFT), 571–573 (SFP), 645–648 (TYYN), and 791–796 (SLIKKR). Positions 627 to 806 (MPNLMTHLKK…FAAGKYLADN (180 aa)) are necessary and sufficient to mediate interaction with CANX.

As to quaternary structure, interacts with proteins essential or regulating the formation of functional clathrin-coated pits. Interacts with CANX. Interacts with AP2A1. Interacts with EPS15. Interacts with SH3GL3. Interacts with AMPH. Interacts with ITSN1 (via SH3 domains). Interacts with and REPS1. Detected in brain, spinal cord and cerebellum.

The protein resides in the membrane. It is found in the clathrin-coated pit. Functionally, may function in clathrin-mediated endocytosis. Has both a membrane binding/tubulating activity and the ability to recruit proteins essential to the formation of functional clathrin-coated pits. Has a preference for membranes enriched in phosphatidylserine and phosphoinositides and is required for the endocytosis of the transferrin receptor. May also bind tubulin. May play a role in the regulation of energy homeostasis. This Mus musculus (Mouse) protein is SH3-containing GRB2-like protein 3-interacting protein 1 (Sgip1).